Consider the following 139-residue polypeptide: Small ribosomal subunit protein bS16 (139 aa).

Residues 84 to 139 (KGEPAPAPLLQPAEKAARPSFEAIGGEDEGKGEAITQKKKADKKDEAAAESSASEA) form a disordered region.

Belongs to the bacterial ribosomal protein bS16 family.

This Streptomyces coelicolor (strain ATCC BAA-471 / A3(2) / M145) protein is Small ribosomal subunit protein bS16.